Consider the following 291-residue polypeptide: Dihydroorotate dehydrogenase B (NAD(+)), catalytic subunit (291 aa).

Residues Ser-17 and 42–43 (KT) each bind FMN. Substrate is bound by residues Lys-42, 67–71 (NAIGL), and Asn-118. Residue Asn-118 coordinates FMN. Residue Ser-121 is the Nucleophile of the active site. FMN contacts are provided by Lys-153 and Ile-178. 179–180 (NT) lines the substrate pocket. FMN-binding positions include Gly-204, 230–231 (GG), and 252–253 (GT).

Belongs to the dihydroorotate dehydrogenase family. Type 1 subfamily. As to quaternary structure, heterotetramer of 2 PyrK and 2 PyrD type B subunits. FMN serves as cofactor.

The protein localises to the cytoplasm. The enzyme catalyses (S)-dihydroorotate + NAD(+) = orotate + NADH + H(+). It participates in pyrimidine metabolism; UMP biosynthesis via de novo pathway; orotate from (S)-dihydroorotate (NAD(+) route): step 1/1. Catalyzes the conversion of dihydroorotate to orotate with NAD(+) as electron acceptor. In Sulfolobus acidocaldarius (strain ATCC 33909 / DSM 639 / JCM 8929 / NBRC 15157 / NCIMB 11770), this protein is Dihydroorotate dehydrogenase B (NAD(+)), catalytic subunit (pyrD).